Reading from the N-terminus, the 176-residue chain is Ribosome maturation factor RimM (176 aa).

The PRC barrel domain maps to 97–176 (EDEFYWRDLI…QILVDWDPDF (80 aa)).

The protein belongs to the RimM family. In terms of assembly, binds ribosomal protein uS19.

It is found in the cytoplasm. In terms of biological role, an accessory protein needed during the final step in the assembly of 30S ribosomal subunit, possibly for assembly of the head region. Essential for efficient processing of 16S rRNA. May be needed both before and after RbfA during the maturation of 16S rRNA. It has affinity for free ribosomal 30S subunits but not for 70S ribosomes. The protein is Ribosome maturation factor RimM of Shewanella loihica (strain ATCC BAA-1088 / PV-4).